The primary structure comprises 92 residues: YcgL domain-containing protein Sfri_1738 (92 aa).

Residues 1–85 (MICAVYKSGR…PQINLLEQHK (85 aa)) enclose the YcgL domain.

This is YcgL domain-containing protein Sfri_1738 from Shewanella frigidimarina (strain NCIMB 400).